The chain runs to 874 residues: Oxysterol-binding protein-related protein 5 (874 aa).

The disordered stretch occupies residues 1 to 71 (MKEEAFLRRR…PQTPGSATKV (71 aa)). S12 carries the phosphoserine modification. Residues 93–123 (VSKKDALKAQKENYRQEKKRATKQLFSALTD) adopt a coiled-coil conformation. Residues 126-243 (VVIMADSLKI…WLDALELALR (118 aa)) enclose the PH domain. 2 disordered regions span residues 255-277 (QGRD…GLPT) and 299-338 (FSDK…GPWR). Residues 261 to 277 (QGSSPDASPSSLYGLPT) show a composition bias toward polar residues. Positions 299-308 (FSDKSERENA) are enriched in basic and acidic residues. Residues 383–388 (LSRVVL), 445–448 (KPYN), and 477–478 (HH) contribute to the a 1,2-diacyl-sn-glycero-3-phospho-(1D-myo-inositol 4-phosphate) site. A 1,2-diacyl-sn-glycero-3-phospho-L-serine is bound by residues 383–388 (LSRVVL) and N448. S503 serves as a coordination point for a 1,2-diacyl-sn-glycero-3-phospho-L-serine. The span at 660–684 (GDQHKATQEKSVLEEAQRQRAREHQ) shows a compositional bias: basic and acidic residues. Disordered stretches follow at residues 660-685 (GDQH…EHQQ) and 739-798 (GQTT…GGES). A 1,2-diacyl-sn-glycero-3-phospho-(1D-myo-inositol 4-phosphate) is bound by residues K669, E673, and R677. Residues S746 and S749 each carry the phosphoserine modification. The segment covering 754–764 (PSSDRRLRKAS) has biased composition (basic and acidic residues). The span at 765–782 (DQPSGHSQVTESSGSTPE) shows a compositional bias: polar residues. A helical transmembrane segment spans residues 855–873 (SWFLLCIFLTCQLFINYIL).

This sequence belongs to the OSBP family.

Its subcellular location is the endoplasmic reticulum membrane. In terms of biological role, lipid transporter involved in lipid countertransport between the endoplasmic reticulum and the plasma membrane: specifically exchanges phosphatidylserine with phosphatidylinositol 4-phosphate (PI4P), delivering phosphatidylserine to the plasma membrane in exchange for PI4P, which is degraded by the SAC1/SACM1L phosphatase in the endoplasmic reticulum. Binds phosphatidylserine and PI4P in a mutually exclusive manner. May cooperate with NPC1 to mediate the exit of cholesterol from endosomes/lysosomes. Binds 25-hydroxycholesterol and cholesterol. This Mus musculus (Mouse) protein is Oxysterol-binding protein-related protein 5 (Osbpl5).